The sequence spans 185 residues: Ribose 1,5-bisphosphate phosphokinase PhnN (185 aa).

An ATP-binding site is contributed by G10–D17.

It belongs to the ribose 1,5-bisphosphokinase family.

The enzyme catalyses alpha-D-ribose 1,5-bisphosphate + ATP = 5-phospho-alpha-D-ribose 1-diphosphate + ADP. It participates in metabolic intermediate biosynthesis; 5-phospho-alpha-D-ribose 1-diphosphate biosynthesis; 5-phospho-alpha-D-ribose 1-diphosphate from D-ribose 5-phosphate (route II): step 3/3. In terms of biological role, catalyzes the phosphorylation of ribose 1,5-bisphosphate to 5-phospho-D-ribosyl alpha-1-diphosphate (PRPP). This Escherichia coli O157:H7 protein is Ribose 1,5-bisphosphate phosphokinase PhnN.